A 74-amino-acid polypeptide reads, in one-letter code: Small ribosomal subunit protein bS18 (74 aa).

The protein belongs to the bacterial ribosomal protein bS18 family. Part of the 30S ribosomal subunit. Forms a tight heterodimer with protein bS6.

Binds as a heterodimer with protein bS6 to the central domain of the 16S rRNA, where it helps stabilize the platform of the 30S subunit. This chain is Small ribosomal subunit protein bS18, found in Natranaerobius thermophilus (strain ATCC BAA-1301 / DSM 18059 / JW/NM-WN-LF).